Consider the following 222-residue polypeptide: Pyridoxine/pyridoxamine 5'-phosphate oxidase (222 aa).

Substrate-binding positions include 11–14 (RVEY) and K79. FMN contacts are provided by residues 74–79 (RTVLCK), 89–90 (YT), K96, and Q118. Substrate is bound by residues Y136, R140, and S144. Residues 153 to 154 (QS) and W199 each bind FMN. 205 to 207 (RVH) is a substrate binding site. An FMN-binding site is contributed by R209.

Belongs to the pyridoxamine 5'-phosphate oxidase family. Homodimer. It depends on FMN as a cofactor.

The enzyme catalyses pyridoxamine 5'-phosphate + O2 + H2O = pyridoxal 5'-phosphate + H2O2 + NH4(+). It catalyses the reaction pyridoxine 5'-phosphate + O2 = pyridoxal 5'-phosphate + H2O2. It functions in the pathway cofactor metabolism; pyridoxal 5'-phosphate salvage; pyridoxal 5'-phosphate from pyridoxamine 5'-phosphate: step 1/1. It participates in cofactor metabolism; pyridoxal 5'-phosphate salvage; pyridoxal 5'-phosphate from pyridoxine 5'-phosphate: step 1/1. Its function is as follows. Catalyzes the oxidation of either pyridoxine 5'-phosphate (PNP) or pyridoxamine 5'-phosphate (PMP) into pyridoxal 5'-phosphate (PLP). The sequence is that of Pyridoxine/pyridoxamine 5'-phosphate oxidase from Mycolicibacterium vanbaalenii (strain DSM 7251 / JCM 13017 / BCRC 16820 / KCTC 9966 / NRRL B-24157 / PYR-1) (Mycobacterium vanbaalenii).